Reading from the N-terminus, the 169-residue chain is DNA damage-inducible transcript 3 protein (169 aa).

Residues 10–18 form an interaction with TRIB3 region; that stretch reads FGTLSSWEL. Residues 10-26 form an N-terminal region; the sequence is FGTLSSWELEAWYEDLQ. Residues S14, S15, S30, and S31 each carry the phosphoserine; by CK2 modification. Residues 32–139 are disordered; that stretch reads DENGGTYVSP…KVAQLAEENE (108 aa). Residues 74–89 are compositionally biased toward low complexity; sequence TSTSQSPHSPDSSQSS. Phosphoserine; by MAPK14 is present on residues S79 and S82. A bZIP domain is found at 99 to 162; sequence QGRTRKRKQS…EATRRALIDR (64 aa). The tract at residues 101–130 is basic motif; it reads RTRKRKQSGHSPARAGKQRMKEKEQENERK. Residues 119 to 139 show a composition bias toward basic and acidic residues; it reads RMKEKEQENERKVAQLAEENE. Residues 134-148 form a leucine-zipper region; it reads LAEENERLKQEIERL.

Belongs to the bZIP family. In terms of assembly, heterodimer. Interacts with TCF7L2/TCF4, EP300/P300, HDAC1, HDAC5 and HDAC6. Interacts with TRIB3 which blocks its association with EP300/P300. Interacts with FOXO3, CEBPB and ATF4. As to quaternary structure, interacts with isoform AltDDIT3 of DDIT3. Post-translationally, ubiquitinated, leading to its degradation by the proteasome. In terms of processing, phosphorylation at serine residues by MAPK14 enhances its transcriptional activation activity while phosphorylation at serine residues by CK2 inhibits its transcriptional activation activity.

The protein resides in the cytoplasm. It is found in the nucleus. In terms of biological role, multifunctional transcription factor in endoplasmic reticulum (ER) stress response. Plays an essential role in the response to a wide variety of cell stresses and induces cell cycle arrest and apoptosis in response to ER stress. Plays a dual role both as an inhibitor of CCAAT/enhancer-binding protein (C/EBP) function and as an activator of other genes. Acts as a dominant-negative regulator of C/EBP-induced transcription: dimerizes with members of the C/EBP family, impairs their association with C/EBP binding sites in the promoter regions, and inhibits the expression of C/EBP regulated genes. Positively regulates the transcription of TRIB3, IL6, IL8, IL23, TNFRSF10B/DR5, PPP1R15A/GADD34, BBC3/PUMA, BCL2L11/BIM and ERO1L. Negatively regulates; expression of BCL2 and MYOD1, ATF4-dependent transcriptional activation of asparagine synthetase (ASNS), CEBPA-dependent transcriptional activation of hepcidin (HAMP) and CEBPB-mediated expression of peroxisome proliferator-activated receptor gamma (PPARG). Together with ATF4, mediates ER-mediated cell death by promoting expression of genes involved in cellular amino acid metabolic processes, mRNA translation and the unfolded protein response (UPR) in response to ER stress. Inhibits the canonical Wnt signaling pathway by binding to TCF7L2/TCF4, impairing its DNA-binding properties and repressing its transcriptional activity. Plays a regulatory role in the inflammatory response through the induction of caspase-11 (CASP4/CASP11) which induces the activation of caspase-1 (CASP1) and both these caspases increase the activation of pro-IL1B to mature IL1B which is involved in the inflammatory response. Acts as a major regulator of postnatal neovascularization through regulation of endothelial nitric oxide synthase (NOS3)-related signaling. The polypeptide is DNA damage-inducible transcript 3 protein (DDIT3) (Homo sapiens (Human)).